A 594-amino-acid chain; its full sequence is UvrABC system protein C (594 aa).

Positions 14 to 91 constitute a GIY-YIG domain; sequence DKPGCYLMKD…IKKHDPKYNV (78 aa). In terms of domain architecture, UVR spans 196-231; sequence SDIKEQLRERMEKAAEDLDFERAKELRDTIAQMEKV.

The protein belongs to the UvrC family. Interacts with UvrB in an incision complex.

Its subcellular location is the cytoplasm. In terms of biological role, the UvrABC repair system catalyzes the recognition and processing of DNA lesions. UvrC both incises the 5' and 3' sides of the lesion. The N-terminal half is responsible for the 3' incision and the C-terminal half is responsible for the 5' incision. The sequence is that of UvrABC system protein C from Shouchella clausii (strain KSM-K16) (Alkalihalobacillus clausii).